The primary structure comprises 462 residues: Argininosuccinate lyase (462 aa).

Belongs to the lyase 1 family. Argininosuccinate lyase subfamily.

Its subcellular location is the cytoplasm. It catalyses the reaction 2-(N(omega)-L-arginino)succinate = fumarate + L-arginine. It participates in amino-acid biosynthesis; L-arginine biosynthesis; L-arginine from L-ornithine and carbamoyl phosphate: step 3/3. The chain is Argininosuccinate lyase from Bacillus cereus (strain AH820).